A 147-amino-acid chain; its full sequence is Deoxyuridine 5'-triphosphate nucleotidohydrolase (147 aa).

Substrate-binding positions include 67-69, asparagine 80, and 84-86; these read RSG and TID.

The protein belongs to the dUTPase family. It depends on Mg(2+) as a cofactor.

The enzyme catalyses dUTP + H2O = dUMP + diphosphate + H(+). It participates in pyrimidine metabolism; dUMP biosynthesis; dUMP from dCTP (dUTP route): step 2/2. Its function is as follows. This enzyme is involved in nucleotide metabolism: it produces dUMP, the immediate precursor of thymidine nucleotides and it decreases the intracellular concentration of dUTP so that uracil cannot be incorporated into DNA. This is Deoxyuridine 5'-triphosphate nucleotidohydrolase from Anaeromyxobacter dehalogenans (strain 2CP-C).